Consider the following 503-residue polypeptide: CDK5 regulatory subunit-associated protein 3 (503 aa).

3 consecutive short sequence motifs (shuffled ATG8-binding motif) follow at residues 266–269, 288–291, and 306–309; these read IDWG. The required for interaction with UFL1 and mediates interaction with CHEK1 stretch occupies residues 268-503; the sequence is WGDFGVEAVS…RPVNLMGTSL (236 aa). The segment at 352–367 is RPL10a-binding domain (RBD); that stretch reads DELMELEIFLSQRAVE. Lys447 is covalently cross-linked (Glycyl lysine isopeptide (Lys-Gly) (interchain with G-Cter in SUMO2)).

It belongs to the CDK5RAP3 family. In terms of assembly, substrate adapter component of the UFM1 ribosome E3 ligase (UREL) complex, composed of UFL1, DDRGK1 and CDK5RAP3. Interaction with UFL1 anchors CDK5RAP3 in the cytoplasm, preventing its translocation to the nucleus which allows expression of the CCND1 cyclin and progression of cells through the G1/S transition. Interacts with ATG8 family proteins MAP1LC3A, MAP1LC3B, GABARAP, GABARAPL1 and GABARAPL2. Interacts with CDK5R1; competes with CDK5RAP1 and CDK5RAP2. Interacts with RELA. Interacts with CHEK1; may negatively regulate CHEK1 and thereby stimulate entry into mitosis. Interacts with CDKN2A/ARF and MDM2; forms a ternary complex involved in regulation of p53/TP53. Interacts with MAPK14. Interacts with CCNB1. Interacts with TUBG1; may regulate CDK5RAP3 in mitotic G2/M transition checkpoint. In terms of processing, may be phosphorylated by CDK5. Post-translationally, ubiquitinated. Probably triggers proteasomal degradation and is negatively regulated by UFL1. May be ufmylated. In terms of processing, cleaved by caspases early during apoptosis, the resulting peptides may play a role in rupture of the nuclear envelope. In terms of tissue distribution, widely expressed with higher expression in secretory tissues.

The protein localises to the endoplasmic reticulum membrane. Its subcellular location is the cytoplasm. It is found in the nucleus. It localises to the cytoskeleton. The protein resides in the microtubule organizing center. The protein localises to the centrosome. Its function is as follows. Substrate adapter of E3 ligase complexes mediating ufmylation, the covalent attachment of the ubiquitin-like modifier UFM1 to substrate proteins, and which is involved in various processes, such as ribosome recycling and reticulophagy (also called ER-phagy). As part of the UREL complex, plays a key role in ribosome recycling by promoting mono-ufmylation of RPL26/uL24 subunit of the 60S ribosome. Ufmylation of RPL26/uL24 occurs on free 60S ribosomes following ribosome dissociation: it weakens the junction between post-termination 60S subunits and SEC61 translocons, promoting release and recycling of the large ribosomal subunit from the endoplasmic reticulum membrane. Ufmylation of RPL26/uL24 and subsequent 60S ribosome recycling either take place after normal termination of translation or after ribosome stalling during cotranslational translocation at the endoplasmic reticulum. Within the UREL complex, CDK5RAP3 acts as a substrate adapter that constrains UFL1 ligase activity to mono-ufmylate RPL26/uL24 at 'Lys-134'. The UREL complex is also involved in reticulophagy in response to endoplasmic reticulum stress by promoting ufmylation of proteins such as CYB5R3, thereby promoting lysosomal degradation of ufmylated proteins. Also acts as a regulator of transcription: negatively regulates NF-kappa-B-mediated gene transcription through the control of RELA phosphorylation. Also regulates mitotic G2/M transition checkpoint and mitotic G2 DNA damage checkpoint. Through its interaction with CDKN2A/ARF and MDM2 may induce MDM2-dependent p53/TP53 ubiquitination, stabilization and activation in the nucleus, thereby promoting G1 cell cycle arrest and inhibition of cell proliferation. May also play a role in the rupture of the nuclear envelope during apoptosis. May regulate MAPK14 activity by regulating its dephosphorylation by PPM1D/WIP1. Required for liver development. This Mus musculus (Mouse) protein is CDK5 regulatory subunit-associated protein 3.